The following is a 174-amino-acid chain: Probable nicotinate-nucleotide adenylyltransferase (174 aa).

Belongs to the NadD family.

It catalyses the reaction nicotinate beta-D-ribonucleotide + ATP + H(+) = deamido-NAD(+) + diphosphate. The protein operates within cofactor biosynthesis; NAD(+) biosynthesis; deamido-NAD(+) from nicotinate D-ribonucleotide: step 1/1. Functionally, catalyzes the reversible adenylation of nicotinate mononucleotide (NaMN) to nicotinic acid adenine dinucleotide (NaAD). The chain is Probable nicotinate-nucleotide adenylyltransferase from Helicobacter pylori (strain HPAG1).